An 88-amino-acid polypeptide reads, in one-letter code: Large ribosomal subunit protein bL27 (88 aa).

Positions 1–24 are disordered; it reads MAHKKGTGSTRNGRDSNSKRLGVK.

The protein belongs to the bacterial ribosomal protein bL27 family.

The protein is Large ribosomal subunit protein bL27 of Prochlorococcus marinus (strain MIT 9303).